The primary structure comprises 254 residues: MSFVVVIPARYQSSRLPGKPLADIHGKPMIAWVVERAKQAGASQVIVAVDDERVAAAVSALGVDVCMTGSHHQSGTERLAEVCEKYAFAPDTIIVNVQGDEPLIPPAIITQVADNLANTSAPMATLAVAIEDEHELFNPNAVKVVMDKQGYALYFSRATIPWDRDGFAQQPKQWRHTFLRHIGIYAYRAGFIRQYVSWPVSPLEQIESLEQLRVLWHSEKIHVAVAAENPPAGVDTAEDLEKVRRFLGNIKSEK.

It belongs to the KdsB family.

It localises to the cytoplasm. It catalyses the reaction 3-deoxy-alpha-D-manno-oct-2-ulosonate + CTP = CMP-3-deoxy-beta-D-manno-octulosonate + diphosphate. Its pathway is nucleotide-sugar biosynthesis; CMP-3-deoxy-D-manno-octulosonate biosynthesis; CMP-3-deoxy-D-manno-octulosonate from 3-deoxy-D-manno-octulosonate and CTP: step 1/1. It participates in bacterial outer membrane biogenesis; lipopolysaccharide biosynthesis. Functionally, activates KDO (a required 8-carbon sugar) for incorporation into bacterial lipopolysaccharide in Gram-negative bacteria. This Tolumonas auensis (strain DSM 9187 / NBRC 110442 / TA 4) protein is 3-deoxy-manno-octulosonate cytidylyltransferase.